Here is a 226-residue protein sequence, read N- to C-terminus: PtdIns3K complex I subunit atg38 (226 aa).

Position 2 is an N-acetylserine (Ser-2). Coiled-coil stretches lie at residues 52–85 and 182–209; these read DVTQ…ENNI and FKEY…LRER.

Belongs to the ATG38 family. As to quaternary structure, homodimer. Component of the autophagy-specific VPS34 PI3-kinase complex I composed of VPS15, VPS30, VPS34, ATG14 and an ATG38 homodimer. Interacts directly with ATG14 and VPS34.

The protein localises to the cytoplasm. Its subcellular location is the preautophagosomal structure membrane. Autophagy-related protein required for cytoplasm to vacuole transport (Cvt) and autophagy as a part of the autophagy-specific VPS34 PI3-kinase complex I. This complex is essential to recruit the ATG8-phosphatidylinositol conjugate and the ATG12-ATG5 conjugate to the pre-autophagosomal structure. ATG38 is required for the integrity of the active PI3-kinase complex I by maintaining an association between VPS15-VPS34 and ATG14-VPS30 subcomplexes. This Saccharomyces cerevisiae (strain ATCC 204508 / S288c) (Baker's yeast) protein is PtdIns3K complex I subunit atg38.